The chain runs to 84 residues: Large ribosomal subunit protein bL31B (84 aa).

This sequence belongs to the bacterial ribosomal protein bL31 family. Type B subfamily. Part of the 50S ribosomal subunit.

The polypeptide is Large ribosomal subunit protein bL31B (Phocaeicola vulgatus (strain ATCC 8482 / DSM 1447 / JCM 5826 / CCUG 4940 / NBRC 14291 / NCTC 11154) (Bacteroides vulgatus)).